Reading from the N-terminus, the 506-residue chain is FAD-linked oxidoreductase aurO (506 aa).

In terms of domain architecture, FAD-binding PCMH-type spans 92 to 260 (ITAQPLAICR…AETDVRVYPM (169 aa)).

The protein belongs to the oxygen-dependent FAD-linked oxidoreductase family. Might be part of an extracellular enzyme complex composed of GIP1, aurF, aurO and aurS. Requires FAD as cofactor.

It localises to the secreted. Its subcellular location is the extracellular space. The protein operates within pigment biosynthesis. Functionally, FAD-linked oxidoreductase; part of the gene cluster that mediates the biosynthesis of aurofusarin, a red mycelium pigment which is acting as a mycotoxin. The first step is performed by the polyketide synthase which condenses one acetyl-CoA and 6 malonyl-CoA units to form the first intermediate, the cyclic heptaketide and yellow pigment YWA1. The C2 hydroxyl group in the pyrone ring of YWA1 is probably formed during ring closure by an aldol-type cyclization reaction. The dehydratase aurZ then acts as the first tailoring enzyme in the aurofusarin biosynthetic pathway by converting YWA1 to nor-rubrofusarin. Nor-rubrofusarin is then methylated to rubrofusarin by the O-methyltransferase aurJ. Rubrofusarin is then transported across the plasma membrane by the rubrofusarin-specific pump aurT for further enzymatic processing by the extracellular complex composed of GIP1, aurF, aurO and aurS to yield aurofusarin. In Gibberella zeae (strain ATCC MYA-4620 / CBS 123657 / FGSC 9075 / NRRL 31084 / PH-1) (Wheat head blight fungus), this protein is FAD-linked oxidoreductase aurO.